The sequence spans 406 residues: Putative F-box protein At5g38270 (406 aa).

The region spanning 20 to 67 is the F-box domain; sequence HDWSKLCPDILRSILESLSSTDFHRAKTVCSDWYSNWKTCVKPLCPWR.

The chain is Putative F-box protein At5g38270 from Arabidopsis thaliana (Mouse-ear cress).